Consider the following 372-residue polypeptide: Chaperone protein DnaJ (372 aa).

Residues 5 to 70 (DYYDVLGVER…QKRANYDQYG (66 aa)) enclose the J domain. The CR-type zinc-finger motif lies at 130 to 208 (GTTKDIQINT…CHGDGRVHKK (79 aa)). 8 residues coordinate Zn(2+): Cys-143, Cys-146, Cys-160, Cys-163, Cys-182, Cys-185, Cys-196, and Cys-199. CXXCXGXG motif repeat units follow at residues 143–150 (CDSCDGSG), 160–167 (CSTCHGAG), 182–189 (CPSCHGSG), and 196–203 (CKSCHGDG).

It belongs to the DnaJ family. Homodimer. Requires Zn(2+) as cofactor.

The protein resides in the cytoplasm. Functionally, participates actively in the response to hyperosmotic and heat shock by preventing the aggregation of stress-denatured proteins and by disaggregating proteins, also in an autonomous, DnaK-independent fashion. Unfolded proteins bind initially to DnaJ; upon interaction with the DnaJ-bound protein, DnaK hydrolyzes its bound ATP, resulting in the formation of a stable complex. GrpE releases ADP from DnaK; ATP binding to DnaK triggers the release of the substrate protein, thus completing the reaction cycle. Several rounds of ATP-dependent interactions between DnaJ, DnaK and GrpE are required for fully efficient folding. Also involved, together with DnaK and GrpE, in the DNA replication of plasmids through activation of initiation proteins. The protein is Chaperone protein DnaJ of Pasteurella multocida (strain Pm70).